We begin with the raw amino-acid sequence, 783 residues long: Rabenosyn-5 (783 aa).

Residue A2 is modified to N-acetylalanine. S3 is subject to Phosphoserine. The segment at 14–37 adopts a C2H2-type zinc-finger fold; that stretch reads FLCPLCLKDLQSFYQLQSHYEEEH. The necessary for the correct targeting to endosomes stretch occupies residues 99 to 262; it reads RSHLSDFKKH…HCKDKLLKRE (164 aa). The FYVE-type zinc-finger motif lies at 156–259; the sequence is DQDVPFCPDC…CCTHCKDKLL (104 aa). The Zn(2+) site is built by C162, C165, C178, C181, C186, and C189. The segment covering 206–223 has biased composition (polar residues); it reads KDSLSTHTSPSQSPNSVH. The disordered stretch occupies residues 206–240; the sequence is KDSLSTHTSPSQSPNSVHGSRRGSISSMSSVSSVL. 4 positions are modified to phosphoserine: S214, S218, S225, and S229. The segment covering 227–239 has biased composition (low complexity); it reads RGSISSMSSVSSV. Zn(2+) is bound by residues C251 and C254. The tract at residues 263-499 is necessary for interaction with RAB4A; sequence QQMDEKEHTP…QLQDEYDQQQ (237 aa). Residues 263-783 form a necessary for interaction with EHD1 region; it reads QQMDEKEHTP…TLAKQKGAPN (521 aa). Coiled coils occupy residues 377–412 and 471–531; these read TKEQ…KLEE and QAKA…ELER. Composition is skewed to basic and acidic residues over residues 387 to 399 and 405 to 414; these read KRKQ…RTVE and ESRRKLEERQ. The disordered stretch occupies residues 387–433; it reads KRKQDLEQKRTVERQAALESRRKLEERQSGLASHTANGDVRSLRGIP. Positions 495 to 514 constitute a UIM domain; that stretch reads YDQQQTEKAIELSRKQAEEE. Disordered regions lie at residues 569 to 638 and 663 to 733; these read SYSL…SPTE and FEED…EEHI. Composition is skewed to polar residues over residues 571–584 and 610–623; these read SLDQ…SSTA and TLPQ…SDKA. The interval 627–783 is necessary for interaction with RAB5A; the sequence is PFDEDDLSSP…TLAKQKGAPN (157 aa). Residues 663 to 673 are compositionally biased toward acidic residues; that stretch reads FEEDAEEEEVA. Residue S686 is modified to Phosphoserine. Positions 721–733 are enriched in acidic residues; that stretch reads VDSDSGMEAEEHI.

As to quaternary structure, interacts with EHD1, RAB4A, RAB5A, RAB22A, RAB24 and VPS45. Binds simultaneously to RAB4A and RAB5A in vitro. Interacts with RAB4A and RAB5A that has been activated by GTP binding.

It localises to the cell membrane. It is found in the early endosome membrane. Functionally, rab4/Rab5 effector protein acting in early endocytic membrane fusion and membrane trafficking of recycling endosomes. Required for endosome fusion either homotypically or with clathrin coated vesicles. Plays a role in the lysosomal trafficking of CTSD/cathepsin D from the Golgi to lysosomes. Also promotes the recycling of transferrin directly from early endosomes to the plasma membrane. Binds phospholipid vesicles containing phosphatidylinositol 3-phosphate (PtdInsP3). Plays a role in the recycling of transferrin receptor to the plasma membrane. This Mus musculus (Mouse) protein is Rabenosyn-5.